We begin with the raw amino-acid sequence, 219 residues long: Transcriptional activator protein rep2 (219 aa).

A zinc finger spans residues 177-197 (CSKCNTTFNHSTALMMHEATC).

Functionally, transcriptional activator which interacts with the mcb binding subunit complex formed by res2 and cdc10. Rep2 is required for the mitotic cell cycle start. The sequence is that of Transcriptional activator protein rep2 (rep2) from Schizosaccharomyces pombe (strain 972 / ATCC 24843) (Fission yeast).